A 506-amino-acid polypeptide reads, in one-letter code: Aluminum-activated malate transporter 7 (506 aa).

The next 6 helical transmembrane spans lie at 28 to 48, 52 to 72, 78 to 98, 104 to 124, 130 to 150, and 166 to 186; these read VGLV…YDSF, AMWA…ATLG, VAAT…ASMS, PILL…VRFF, RYDY…VSGF, and VIIG…VWAG. Residues 461-485 are disordered; that stretch reads DDGNNDDTSKNDNGSKEVSIHEKHE. Residues 467–485 are compositionally biased toward basic and acidic residues; that stretch reads DTSKNDNGSKEVSIHEKHE.

Belongs to the aromatic acid exporter (TC 2.A.85) family.

It is found in the membrane. Its function is as follows. Malate transporter. This is Aluminum-activated malate transporter 7 (ALMT7) from Arabidopsis thaliana (Mouse-ear cress).